The sequence spans 481 residues: Arylsulfatase (481 aa).

Residues Asp11, Gln12, and Cys51 each coordinate Ca(2+). Cys51 (nucleophile) is an active-site residue. Cys51 carries the post-translational modification 3-oxoalanine (Cys). His102 is an active-site residue. Ca(2+)-binding residues include Asp302 and His303.

This sequence belongs to the sulfatase family. Ca(2+) is required as a cofactor. Post-translationally, the conversion to 3-oxoalanine (also known as C-formylglycine, FGly), of a serine or cysteine residue in prokaryotes and of a cysteine residue in eukaryotes, is critical for catalytic activity.

It catalyses the reaction an aryl sulfate + H2O = a phenol + sulfate + H(+). Its function is as follows. Has sulfatase activity toward para-nitrophenyl sulfate, which is increased in presence of calcium ion. The protein is Arylsulfatase of Clostridium perfringens (strain 13 / Type A).